A 584-amino-acid polypeptide reads, in one-letter code: A-type ATP synthase subunit A 2 (584 aa).

227–234 (GGFGTGKT) contributes to the ATP binding site.

Belongs to the ATPase alpha/beta chains family. As to quaternary structure, has multiple subunits with at least A(3), B(3), C, D, E, F, H, I and proteolipid K(x).

Its subcellular location is the cell membrane. It catalyses the reaction ATP + H2O + 4 H(+)(in) = ADP + phosphate + 5 H(+)(out). In terms of biological role, component of the A-type ATP synthase that produces ATP from ADP in the presence of a proton gradient across the membrane. The A chain is the catalytic subunit. In Methanospirillum hungatei JF-1 (strain ATCC 27890 / DSM 864 / NBRC 100397 / JF-1), this protein is A-type ATP synthase subunit A 2.